A 502-amino-acid polypeptide reads, in one-letter code: MSGGPMGGRPGGRGAPAVQQNIPSTLLQDHENQRLFEMLGRKCLTLATAVVQLYLALPPGAEHWTKEHCGAVCFVKDNPQKSYFIRLYGLQAGRLLWEQELYSQLVYSTPTPFFHTFAGDDCQAGLNFADEDEAQAFRALVQEKIQKRNQRQSGDRRQLPPPPTPANEERRGGLPPLPLHPGGDQGGPPVGPLSLGLATVDIQNPDITSSRYRGLPAPGPSPADKKRSGKKKISKADIGAPSGFKHVSHVGWDPQNGFDVNNLDPDLRSLFSRAGISEAQLTDAETSKLIYDFIEDQGGLEAVRQEMRRQEPLPPPPPPSRGGNQLPRPPIVGGNKGRSGPLPPVPLGIAPPPPTPRGPPPPGRGGPPPPPPPATGRSGPLPPPPPGAGGPPMPPPPPPPPPPPSSGNGPAPPPLPPALVPAGGLAPGGGRGALLDQIRQGIQLNKTPGAPESSALQPPPQSSEGLVGALMHVMQKRSRAIHSSDEGEDQAGDEDEDDEWDD.

In terms of domain architecture, WH1 spans 39 to 148 (LGRKCLTLAT…ALVQEKIQKR (110 aa)). The interval 146–240 (QKRNQRQSGD…KKISKADIGA (95 aa)) is disordered. Residues 201-211 (DIQNPDITSSR) show a composition bias toward polar residues. S221 carries the phosphoserine modification. Residues 238-251 (IGAPSGFKHVSHVG) form the CRIB domain. Y291 carries the post-translational modification Phosphotyrosine; by FYN and HCK. Positions 307–502 (MRRQEPLPPP…DEDEDDEWDD (196 aa)) are disordered. 2 GRSGPLPPXP motif repeats span residues 337-346 (GRSGPLPPVP) and 376-385 (GRSGPLPPPP). Residues 341–419 (PLPPVPLGIA…PAPPPLPPAL (79 aa)) show a composition bias toward pro residues. Residues 430–447 (GRGALLDQIRQGIQLNKT) enclose the WH2 domain. 2 positions are modified to phosphoserine; by CK2: S483 and S484. Residues 486–502 (EGEDQAGDEDEDDEWDD) are compositionally biased toward acidic residues.

In terms of assembly, binds the Arp2/3 complex. Interacts with CDC42, RAC, NCK, HCK, FYN, SRC kinase FGR, BTK, ABL1, PSTPIP1, WIP, and to the p85 subunit of PLC-gamma. Interacts (via C-terminus) with ALDOA. Interacts with NCK1 (via SH3 domains). Interacts with FCHSD2. (Microbial infection) Interacts with E.coli effector protein EspF(U). Post-translationally, phosphorylated at Tyr-291 by FYN and HCK, inducing WAS effector activity after TCR engagement. Phosphorylation at Tyr-291 enhances WAS activity in promoting actin polymerization and filopodia formation. As to expression, expressed predominantly in the thymus. Also found, to a much lesser extent, in the spleen.

The protein resides in the cytoplasm. The protein localises to the cytoskeleton. Its subcellular location is the nucleus. Effector protein for Rho-type GTPases that regulates actin filament reorganization via its interaction with the Arp2/3 complex. Important for efficient actin polymerization. Possible regulator of lymphocyte and platelet function. Mediates actin filament reorganization and the formation of actin pedestals upon infection by pathogenic bacteria. In addition to its role in the cytoplasmic cytoskeleton, also promotes actin polymerization in the nucleus, thereby regulating gene transcription and repair of damaged DNA. Promotes homologous recombination (HR) repair in response to DNA damage by promoting nuclear actin polymerization, leading to drive motility of double-strand breaks (DSBs). This chain is Actin nucleation-promoting factor WAS (WAS), found in Homo sapiens (Human).